Reading from the N-terminus, the 225-residue chain is 2-C-methyl-D-erythritol 4-phosphate cytidylyltransferase (225 aa).

This sequence belongs to the IspD/TarI cytidylyltransferase family. IspD subfamily.

It carries out the reaction 2-C-methyl-D-erythritol 4-phosphate + CTP + H(+) = 4-CDP-2-C-methyl-D-erythritol + diphosphate. It participates in isoprenoid biosynthesis; isopentenyl diphosphate biosynthesis via DXP pathway; isopentenyl diphosphate from 1-deoxy-D-xylulose 5-phosphate: step 2/6. In terms of biological role, catalyzes the formation of 4-diphosphocytidyl-2-C-methyl-D-erythritol from CTP and 2-C-methyl-D-erythritol 4-phosphate (MEP). The chain is 2-C-methyl-D-erythritol 4-phosphate cytidylyltransferase from Clostridium perfringens (strain SM101 / Type A).